A 196-amino-acid polypeptide reads, in one-letter code: Elongation factor Ts (196 aa).

The segment at 80–83 is involved in Mg(2+) ion dislocation from EF-Tu; the sequence is TDFV.

The protein belongs to the EF-Ts family.

It localises to the cytoplasm. Functionally, associates with the EF-Tu.GDP complex and induces the exchange of GDP to GTP. It remains bound to the aminoacyl-tRNA.EF-Tu.GTP complex up to the GTP hydrolysis stage on the ribosome. The sequence is that of Elongation factor Ts from Desulfotalea psychrophila (strain LSv54 / DSM 12343).